The primary structure comprises 282 residues: NADPH-dependent 7-cyano-7-deazaguanine reductase (282 aa).

Substrate is bound at residue 88-90 (IES). Position 90-91 (90-91 (SK)) interacts with NADPH. The active-site Thioimide intermediate is the Cys190. Residue Asp197 is the Proton donor of the active site. A substrate-binding site is contributed by 229-230 (HE). Residue 258-259 (RG) participates in NADPH binding.

The protein belongs to the GTP cyclohydrolase I family. QueF type 2 subfamily. In terms of assembly, homodimer.

Its subcellular location is the cytoplasm. It carries out the reaction 7-aminomethyl-7-carbaguanine + 2 NADP(+) = 7-cyano-7-deazaguanine + 2 NADPH + 3 H(+). Its pathway is tRNA modification; tRNA-queuosine biosynthesis. In terms of biological role, catalyzes the NADPH-dependent reduction of 7-cyano-7-deazaguanine (preQ0) to 7-aminomethyl-7-deazaguanine (preQ1). In Salmonella arizonae (strain ATCC BAA-731 / CDC346-86 / RSK2980), this protein is NADPH-dependent 7-cyano-7-deazaguanine reductase.